The chain runs to 242 residues: Glucosamine-6-phosphate deaminase (242 aa).

The Proton acceptor; for enolization step role is filled by D67. Residue N136 is the For ring-opening step of the active site. H138 serves as the catalytic Proton acceptor; for ring-opening step. E143 serves as the catalytic For ring-opening step.

The protein belongs to the glucosamine/galactosamine-6-phosphate isomerase family. NagB subfamily.

It catalyses the reaction alpha-D-glucosamine 6-phosphate + H2O = beta-D-fructose 6-phosphate + NH4(+). It participates in amino-sugar metabolism; N-acetylneuraminate degradation; D-fructose 6-phosphate from N-acetylneuraminate: step 5/5. In terms of biological role, catalyzes the reversible isomerization-deamination of glucosamine 6-phosphate (GlcN6P) to form fructose 6-phosphate (Fru6P) and ammonium ion. The protein is Glucosamine-6-phosphate deaminase of Clostridium beijerinckii (strain ATCC 51743 / NCIMB 8052) (Clostridium acetobutylicum).